The following is a 238-amino-acid chain: Uridylate kinase (238 aa).

Residue 12 to 15 (KLSG) coordinates ATP. G54 contacts UMP. ATP contacts are provided by G55 and R59. UMP contacts are provided by residues D74 and 135–142 (VGAPYFTT). ATP is bound by residues T162, Y168, and D171.

It belongs to the UMP kinase family. Homohexamer.

The protein resides in the cytoplasm. It carries out the reaction UMP + ATP = UDP + ADP. It participates in pyrimidine metabolism; CTP biosynthesis via de novo pathway; UDP from UMP (UMPK route): step 1/1. With respect to regulation, inhibited by UTP. Functionally, catalyzes the reversible phosphorylation of UMP to UDP. This chain is Uridylate kinase, found in Erythrobacter litoralis (strain HTCC2594).